The primary structure comprises 467 residues: Putative alpha-amylase (467 aa).

The Nucleophile role is filled by Glu-145.

This sequence belongs to the glycosyl hydrolase 57 family.

The enzyme catalyses Endohydrolysis of (1-&gt;4)-alpha-D-glucosidic linkages in polysaccharides containing three or more (1-&gt;4)-alpha-linked D-glucose units.. This is Putative alpha-amylase from Methanocaldococcus jannaschii (strain ATCC 43067 / DSM 2661 / JAL-1 / JCM 10045 / NBRC 100440) (Methanococcus jannaschii).